The sequence spans 291 residues: ATP synthase gamma chain (291 aa).

Belongs to the ATPase gamma chain family. In terms of assembly, F-type ATPases have 2 components, CF(1) - the catalytic core - and CF(0) - the membrane proton channel. CF(1) has five subunits: alpha(3), beta(3), gamma(1), delta(1), epsilon(1). CF(0) has three main subunits: a, b and c.

The protein localises to the cell inner membrane. In terms of biological role, produces ATP from ADP in the presence of a proton gradient across the membrane. The gamma chain is believed to be important in regulating ATPase activity and the flow of protons through the CF(0) complex. The polypeptide is ATP synthase gamma chain (Cupriavidus necator (strain ATCC 17699 / DSM 428 / KCTC 22496 / NCIMB 10442 / H16 / Stanier 337) (Ralstonia eutropha)).